The following is a 422-amino-acid chain: Phosphoribosylamine--glycine ligase (422 aa).

One can recognise an ATP-grasp domain in the interval 107–314 (KAFMQRHGIP…LFDVLDRAID (208 aa)). Position 133–194 (133–194 (VDREGAPIVI…EEFLAGEEAS (62 aa))) interacts with ATP. 2 residues coordinate Mg(2+): E284 and N286.

Belongs to the GARS family. The cofactor is Mg(2+). Mn(2+) is required as a cofactor.

The catalysed reaction is 5-phospho-beta-D-ribosylamine + glycine + ATP = N(1)-(5-phospho-beta-D-ribosyl)glycinamide + ADP + phosphate + H(+). Its pathway is purine metabolism; IMP biosynthesis via de novo pathway; N(1)-(5-phospho-D-ribosyl)glycinamide from 5-phospho-alpha-D-ribose 1-diphosphate: step 2/2. This Ralstonia nicotianae (strain ATCC BAA-1114 / GMI1000) (Ralstonia solanacearum) protein is Phosphoribosylamine--glycine ligase.